The sequence spans 299 residues: Hemolysin C homolog (299 aa).

CBS domains lie at 80–142 and 145–202; these read MVPR…NGRL and LIRK…IDDE.

This sequence belongs to the UPF0053 family. Hemolysin C subfamily.

This Rickettsia massiliae (strain Mtu5) protein is Hemolysin C homolog (tlyC).